We begin with the raw amino-acid sequence, 324 residues long: Methionyl-tRNA formyltransferase (324 aa).

(6S)-5,6,7,8-tetrahydrofolate is bound at residue 109–112 (SILP).

This sequence belongs to the Fmt family.

It carries out the reaction L-methionyl-tRNA(fMet) + (6R)-10-formyltetrahydrofolate = N-formyl-L-methionyl-tRNA(fMet) + (6S)-5,6,7,8-tetrahydrofolate + H(+). Attaches a formyl group to the free amino group of methionyl-tRNA(fMet). The formyl group appears to play a dual role in the initiator identity of N-formylmethionyl-tRNA by promoting its recognition by IF2 and preventing the misappropriation of this tRNA by the elongation apparatus. The polypeptide is Methionyl-tRNA formyltransferase (Acidothermus cellulolyticus (strain ATCC 43068 / DSM 8971 / 11B)).